Here is a 218-residue protein sequence, read N- to C-terminus: Putative glutamine transport system permease protein GlnP (218 aa).

One can recognise an ABC transmembrane type-1 domain in the interval 19-208 (TLITLKYSVI…ILVMLISFIA (190 aa)). 4 consecutive transmembrane segments (helical) span residues 25–45 (YSVI…LCKV), 57–79 (FYTS…FASP), 86–108 (FTVF…SEVI), and 187–207 (FFPM…ISFI).

It belongs to the binding-protein-dependent transport system permease family. HisMQ subfamily.

Its subcellular location is the cell inner membrane. In terms of biological role, part of the binding-protein-dependent transport system for glutamine; probably responsible for the translocation of the substrate across the membrane. The sequence is that of Putative glutamine transport system permease protein GlnP (glnP) from Rickettsia bellii (strain RML369-C).